Here is a 392-residue protein sequence, read N- to C-terminus: Phosphopentomutase (392 aa).

The Mn(2+) site is built by Asp15, Asp287, His292, Asp328, His329, and His340.

Belongs to the phosphopentomutase family. Mn(2+) is required as a cofactor.

The protein resides in the cytoplasm. The enzyme catalyses 2-deoxy-alpha-D-ribose 1-phosphate = 2-deoxy-D-ribose 5-phosphate. The catalysed reaction is alpha-D-ribose 1-phosphate = D-ribose 5-phosphate. It participates in carbohydrate degradation; 2-deoxy-D-ribose 1-phosphate degradation; D-glyceraldehyde 3-phosphate and acetaldehyde from 2-deoxy-alpha-D-ribose 1-phosphate: step 1/2. In terms of biological role, isomerase that catalyzes the conversion of deoxy-ribose 1-phosphate (dRib-1-P) and ribose 1-phosphate (Rib-1-P) to deoxy-ribose 5-phosphate (dRib-5-P) and ribose 5-phosphate (Rib-5-P), respectively. In Syntrophotalea carbinolica (strain DSM 2380 / NBRC 103641 / GraBd1) (Pelobacter carbinolicus), this protein is Phosphopentomutase.